Here is a 394-residue protein sequence, read N- to C-terminus: Chaperone protein DnaJ (394 aa).

Residues 5 to 75 form the J domain; the sequence is DYYEVLGVDK…EKKQQYDQFG (71 aa). The CR-type zinc-finger motif lies at 150–231; the sequence is GVEKTIKYKR…CRGTGTAKET (82 aa). Zn(2+) is bound by residues cysteine 163, cysteine 166, cysteine 179, cysteine 182, cysteine 205, cysteine 208, cysteine 219, and cysteine 222. CXXCXGXG motif repeat units lie at residues 163 to 170, 179 to 186, 205 to 212, and 219 to 226; these read CEHCHGTG, CPTCNGQG, CPDCHGTG, and CKHCRGTG.

This sequence belongs to the DnaJ family. Homodimer. Zn(2+) is required as a cofactor.

The protein localises to the cytoplasm. In terms of biological role, participates actively in the response to hyperosmotic and heat shock by preventing the aggregation of stress-denatured proteins and by disaggregating proteins, also in an autonomous, DnaK-independent fashion. Unfolded proteins bind initially to DnaJ; upon interaction with the DnaJ-bound protein, DnaK hydrolyzes its bound ATP, resulting in the formation of a stable complex. GrpE releases ADP from DnaK; ATP binding to DnaK triggers the release of the substrate protein, thus completing the reaction cycle. Several rounds of ATP-dependent interactions between DnaJ, DnaK and GrpE are required for fully efficient folding. Also involved, together with DnaK and GrpE, in the DNA replication of plasmids through activation of initiation proteins. This Fusobacterium nucleatum subsp. polymorphum (Fusobacterium polymorphum) protein is Chaperone protein DnaJ.